The chain runs to 786 residues: Cadherin-9 (786 aa).

The N-terminal stretch at 1–21 (MRTYSCLQLVIWTCIFHMVDN) is a signal peptide. N21 carries an N-linked (GlcNAc...) asparagine glycan. The propeptide occupies 22 to 52 (STLQGKDSSHFLRRIVNLKKDEGKMLHRAKR). Over 22–614 (STLQGKDSSH…MLAAGLSTGA (593 aa)) the chain is Extracellular. 5 Cadherin domains span residues 54-158 (WMWN…EPKF), 159-267 (TKDL…PPRF), 268-382 (PQST…PPVF), 383-487 (SKLS…APEF), and 487-604 (FATY…AEAL). N254 carries an N-linked (GlcNAc...) asparagine glycan. N454 and N535 each carry an N-linked (GlcNAc...) asparagine glycan. Residues 615 to 635 (LIAILLCVVILLTLIVLFAAL) form a helical membrane-spanning segment. Residues 636–786 (KRQRKKEPLI…AEMYGGNDSD (151 aa)) lie on the Cytoplasmic side of the membrane. At S785 the chain carries Phosphoserine.

The protein resides in the cell membrane. Its function is as follows. Cadherins are calcium-dependent cell adhesion proteins. They preferentially interact with themselves in a homophilic manner in connecting cells; cadherins may thus contribute to the sorting of heterogeneous cell types. The polypeptide is Cadherin-9 (Cdh9) (Mus musculus (Mouse)).